The sequence spans 498 residues: ATP synthase subunit beta, chloroplastic (498 aa).

Residue 172-179 (GGAGVGKT) participates in ATP binding.

Belongs to the ATPase alpha/beta chains family. In terms of assembly, F-type ATPases have 2 components, CF(1) - the catalytic core - and CF(0) - the membrane proton channel. CF(1) has five subunits: alpha(3), beta(3), gamma(1), delta(1), epsilon(1). CF(0) has four main subunits: a(1), b(1), b'(1) and c(9-12).

The protein localises to the plastid. Its subcellular location is the chloroplast thylakoid membrane. The catalysed reaction is ATP + H2O + 4 H(+)(in) = ADP + phosphate + 5 H(+)(out). Functionally, produces ATP from ADP in the presence of a proton gradient across the membrane. The catalytic sites are hosted primarily by the beta subunits. The polypeptide is ATP synthase subunit beta, chloroplastic (Schisandra sphenanthera (Southern magnolia vine)).